Reading from the N-terminus, the 222-residue chain is MQTWTDVIGSEKEQDYFKATLATVRSEREAGKVIYPPATDVFNAFKLTELDQVKVVILGQDPYHGPNQAHGLCFSVLPGVRTPPSLVNIYKEMQRDLPGFVTPSHGFLESWAKQGVLLLNTVLTVQAGQAHSHAHLGWETFTDRVIEQINASCQGVVFLLWGAHAQKKGRFIDRQRHHVLSAPHPSPLSAHRGFIGCGHFSETNRLLSQQGMSPINWHSVCE.

The active-site Proton acceptor is the aspartate 61.

Belongs to the uracil-DNA glycosylase (UDG) superfamily. UNG family.

The protein resides in the cytoplasm. The catalysed reaction is Hydrolyzes single-stranded DNA or mismatched double-stranded DNA and polynucleotides, releasing free uracil.. Functionally, excises uracil residues from the DNA which can arise as a result of misincorporation of dUMP residues by DNA polymerase or due to deamination of cytosine. The chain is Uracil-DNA glycosylase from Aeromonas hydrophila subsp. hydrophila (strain ATCC 7966 / DSM 30187 / BCRC 13018 / CCUG 14551 / JCM 1027 / KCTC 2358 / NCIMB 9240 / NCTC 8049).